We begin with the raw amino-acid sequence, 67 residues long: UPF0437 protein y4xE (67 aa).

Belongs to the UPF0437 family.

This Sinorhizobium fredii (strain NBRC 101917 / NGR234) protein is UPF0437 protein y4xE.